Reading from the N-terminus, the 446-residue chain is MMITLRKLPLAVAVAAGVMSAQAMAVDFHGYARSGIGWTGSGGEQQCFQTTGAQSKYRLGNECETYAELKLGQEVWKEGDKSFYFDTNVAYSVAQQNDWEATDPAFREANVQGKNLIEWLPGSTIWAGKRFYQRHDVHMIDFYYWDISGPGAGLENIDVGFGKLSLAATRSSEAGGSSSFASNNIYDYTNETANDVFDVRLAQMEINPGGTLELGVDYGRANLRDNYRLVDGASKDGWLFTAEHTQSVLKGFNKFVVQYATDSMTSQGKGLSQGSGVAFDNQKFAYNINNNGHMLRILDHGAISMGDNWDMMYVGMYQDINWDNDNGTKWWTVGIRPMYKWTPIMSTVMEIGYDNVESQRTGDKNNQYKITLAQQWQAGDSIWSRPAIRVFATYAKWDEKWGYDYNGDSKVNPNYGKAVPADFNGGSFGRGDSDEWTFGAQMEIWW.

An N-terminal signal peptide occupies residues 1 to 25 (MMITLRKLPLAVAVAAGVMSAQAMA).

This sequence belongs to the porin LamB (TC 1.B.3) family. Homotrimer formed of three 18-stranded antiparallel beta-barrels, containing three independent channels.

It localises to the cell outer membrane. The catalysed reaction is beta-maltose(in) = beta-maltose(out). Involved in the transport of maltose and maltodextrins. The protein is Maltoporin of Escherichia coli (strain SE11).